The sequence spans 165 residues: Large ribosomal subunit protein uL10 (165 aa).

It belongs to the universal ribosomal protein uL10 family. As to quaternary structure, part of the ribosomal stalk of the 50S ribosomal subunit. The N-terminus interacts with L11 and the large rRNA to form the base of the stalk. The C-terminus forms an elongated spine to which L12 dimers bind in a sequential fashion forming a multimeric L10(L12)X complex.

Its function is as follows. Forms part of the ribosomal stalk, playing a central role in the interaction of the ribosome with GTP-bound translation factors. This is Large ribosomal subunit protein uL10 from Burkholderia multivorans (strain ATCC 17616 / 249).